Here is a 304-residue protein sequence, read N- to C-terminus: Uricase (304 aa).

An N-acetylalanine modification is found at alanine 2. Residues lysine 10 and lysine 23 each carry the N6-acetyllysine; alternate modification. 2 positions are modified to N6-succinyllysine; alternate: lysine 10 and lysine 23. The active-site Charge relay system is lysine 23. N6-acetyllysine is present on residues lysine 27 and lysine 36. A phosphoserine mark is found at serine 39 and serine 63. The active-site Charge relay system is threonine 68. Positions 68 and 69 each coordinate urate. Residues lysine 118, lysine 122, and lysine 164 each carry the N6-acetyllysine modification. Residue phenylalanine 170 coordinates urate. N6-acetyllysine is present on residues lysine 175 and lysine 185. Arginine 187 lines the urate pocket. Residues lysine 221 and lysine 228 each carry the N6-acetyllysine; alternate modification. N6-succinyllysine; alternate occurs at positions 221 and 228. A Phosphoserine modification is found at serine 232. 3 residues coordinate urate: valine 235, glutamine 236, and asparagine 262. Residue histidine 264 is the Charge relay system of the active site. Position 278 is an N6-acetyllysine (lysine 278). Residue tyrosine 289 is modified to Phosphotyrosine. Residues 302–304 carry the Microbody targeting signal motif; it reads SRL.

The protein belongs to the uricase family. As to quaternary structure, homotetramer.

The protein resides in the peroxisome. It catalyses the reaction urate + O2 + H2O = 5-hydroxyisourate + H2O2. It functions in the pathway purine metabolism; urate degradation; (S)-allantoin from urate: step 1/3. Catalyzes the oxidation of uric acid to 5-hydroxyisourate, which is further processed to form (S)-allantoin. This Sus scrofa (Pig) protein is Uricase (UOX).